Consider the following 597-residue polypeptide: Elongation factor 4 (597 aa).

Residues 2–184 (KHIRNFSIIA…NIVSAIPAPE (183 aa)) enclose the tr-type G domain. Residues 14–19 (DHGKST) and 131–134 (NKID) each bind GTP.

Belongs to the TRAFAC class translation factor GTPase superfamily. Classic translation factor GTPase family. LepA subfamily.

Its subcellular location is the cell inner membrane. It carries out the reaction GTP + H2O = GDP + phosphate + H(+). Required for accurate and efficient protein synthesis under certain stress conditions. May act as a fidelity factor of the translation reaction, by catalyzing a one-codon backward translocation of tRNAs on improperly translocated ribosomes. Back-translocation proceeds from a post-translocation (POST) complex to a pre-translocation (PRE) complex, thus giving elongation factor G a second chance to translocate the tRNAs correctly. Binds to ribosomes in a GTP-dependent manner. This Vibrio campbellii (strain ATCC BAA-1116) protein is Elongation factor 4.